Reading from the N-terminus, the 115-residue chain is Replication initiation control protein YabA (115 aa).

Zn(2+) contacts are provided by His90, Cys92, Cys106, and Cys109.

The protein belongs to the YabA family. In terms of assembly, homotetramer. Interacts with both DnaA and DnaN, acting as a bridge between these two proteins. It depends on Zn(2+) as a cofactor.

The protein resides in the cytoplasm. It localises to the nucleoid. Functionally, involved in control of chromosome replication initiation. Inhibits the cooperative binding of DnaA to the oriC region, thus negatively regulating initiation of chromosome replication. Inhibits the ability of DnaA-ATP to form a helix on DNA; does not disassemble preformed DnaA-DNA helices. Decreases the residence time of DnaA on the chromosome at its binding sites (oriC, replication forks and promoter-binding sites). Tethers DnaA to the replication machinery via the DNA polymerase beta sliding clamp subunit (dnaN). Associates with oriC and other DnaA targets on the chromosome in a DnaA-dependent manner. The protein is Replication initiation control protein YabA of Staphylococcus epidermidis (strain ATCC 35984 / DSM 28319 / BCRC 17069 / CCUG 31568 / BM 3577 / RP62A).